The sequence spans 520 residues: Ribonuclease Y (520 aa).

The helical transmembrane segment at 5 to 25 (ITIISSLLFLIVGLVVGSLIF) threads the bilayer. The segment at 70-127 (RTEIENELRGRRTETQKAENRLLQREENLDRKDTSLSKREATLERKEESISKRQQQIE) is disordered. Residues 210–273 (TVSVVTLPND…EIARIALEKL (64 aa)) enclose the KH domain. Residues 336–429 (VLNHSLEVSK…VAAADALSAA (94 aa)) enclose the HD domain.

It belongs to the RNase Y family.

The protein localises to the cell membrane. Endoribonuclease that initiates mRNA decay. This Listeria welshimeri serovar 6b (strain ATCC 35897 / DSM 20650 / CCUG 15529 / CIP 8149 / NCTC 11857 / SLCC 5334 / V8) protein is Ribonuclease Y.